The following is a 1277-amino-acid chain: NPC intracellular cholesterol transporter 1 (1277 aa).

The signal sequence occupies residues 1–22 (MGAHHPALGLLLLLLCPAQVFS). Topologically, residues 23–269 (QSCVWYGECG…WRIWGLDAMY (247 aa)) are lumenal. 9 disulfide bridges follow: cysteine 25–cysteine 74, cysteine 31–cysteine 42, cysteine 63–cysteine 109, cysteine 75–cysteine 113, cysteine 97–cysteine 238, cysteine 100–cysteine 160, cysteine 177–cysteine 184, cysteine 227–cysteine 243, and cysteine 240–cysteine 247. Asparagine 41 lines the cholesterol pocket. A glycan (N-linked (GlcNAc...) asparagine) is linked at asparagine 70. Residue glutamine 79 coordinates cholesterol. N-linked (GlcNAc...) asparagine glycosylation is found at asparagine 122 and asparagine 137. Positions 175–205 (LLCGRDARACNATNWIEYMFNKDNGQAPFTI) are important for cholesterol binding and cholesterol transfer from NPC1 to liposomes. 3 N-linked (GlcNAc...) asparagine glycosylation sites follow: asparagine 185, asparagine 222, and asparagine 228. Residues 270 to 290 (VIMWVTYVAFLFVFFGALLAV) form a helical membrane-spanning segment. The Cytoplasmic portion of the chain corresponds to 291-350 (WCHRRRYFVSEYTPIDSNIAFSVNSSDKGEASCCDPLGAAFDDCLRRMFTKWGAFCVRNP). A helical transmembrane segment spans residues 351-371 (TCIIFFSLAFITVCSSGLVFV). Over 372–621 (QVTTNPVELW…ELNRESNSDV (250 aa)) the chain is Lumenal. N-linked (GlcNAc...) asparagine glycans are attached at residues asparagine 414, asparagine 459, asparagine 478, and asparagine 524. Intrachain disulfides connect cysteine 468–cysteine 479 and cysteine 516–cysteine 533. In terms of domain architecture, SSD spans 620 to 785 (DVFTVIISYV…ITCFVSLLGL (166 aa)). The helical transmembrane segment at 622-642 (FTVIISYVVMFLYISLALGHI) threads the bilayer. Over 643–653 (QSCSRLLVDSK) the chain is Cytoplasmic. A helical transmembrane segment spans residues 654 to 674 (ISLGIAGILIVLSSVACSLGI). Topologically, residues 675–683 (FSYMGMPLT) are lumenal. A helical membrane pass occupies residues 684-704 (LIVIEVIPFLVLAVGVDNIFI). At 705–730 (LVQTYQRDERLQEETLDQQLGRILGE) the chain is on the cytoplasmic side. A helical transmembrane segment spans residues 731–751 (VAPTMFLSSFSETSAFFFGAL). Residues 752 to 759 (SSMPAVHT) lie on the Lumenal side of the membrane. Residues 760–780 (FSLFAGMAVLIDFLLQITCFV) traverse the membrane as a helical segment. The Cytoplasmic portion of the chain corresponds to 781 to 832 (SLLGLDIKRQEKNHLDILCCVRGADDGQGSHASESYLFRFFKNYFAPLLLKD). The helical transmembrane segment at 833 to 853 (WLRPIVVAVFVGVLSFSVAVV) threads the bilayer. The Lumenal portion of the chain corresponds to 854–1097 (NKVDIGLDQS…EQYLTIIDDT (244 aa)). Asparagine 868 and asparagine 898 each carry an N-linked (GlcNAc...) asparagine glycan. Cysteine 909 and cysteine 914 are disulfide-bonded. N-linked (GlcNAc...) asparagine glycosylation is found at asparagine 916, asparagine 961, asparagine 968, and asparagine 1063. Cystine bridges form between cysteine 956–cysteine 1011, cysteine 957–cysteine 979, and cysteine 967–cysteine 976. Residues 1098 to 1118 (IFNLSVSLGSIFLVTLVVLGC) traverse the membrane as a helical segment. At 1119–1123 (ELWSA) the chain is on the cytoplasmic side. Residues 1124–1144 (VIMCITIAMILVNMFGVMWLW) form a helical membrane-spanning segment. A topological domain (lumenal) is located at residue glycine 1145. The chain crosses the membrane as a helical span at residues 1146 to 1166 (ISLNAVSLVNLVMSCGISVEF). Topologically, residues 1167 to 1194 (CSHITRAFTMSTKGSRVSRAEEALAHMG) are cytoplasmic. Residues 1195-1215 (SSVFSGITLTKFGGIVVLAFA) form a helical membrane-spanning segment. Residues 1216-1226 (KSQIFEIFYFR) are Lumenal-facing. A helical membrane pass occupies residues 1227-1247 (MYLAMVLLGATHGLIFLPVLL). The Cytoplasmic segment spans residues 1248–1277 (SYIGPSVNKAKRHTTYERYRGTERERLLNF). The interval 1274–1277 (LLNF) is required for location in lysosomes. The short motif at 1274–1277 (LLNF) is the Di-leucine motif element.

The protein belongs to the patched family. Interacts (via the second lumenal domain) with NPC2. Interacts with TMEM97; the interaction may decrease NPC1 availability to the cell. Interacts with TIM1. Interacts with SLC38A9; this interaction inhibits cholesterol-mediated mTORC1 activation via its sterol transport activity. N-glycosylated. Detected in liver (at protein level). Ubiquitous. Detected in adult heart, spleen, lung, liver, skeletal muscle, kidney, testis.

It is found in the late endosome membrane. Its subcellular location is the lysosome membrane. It catalyses the reaction cholesterol(in) = cholesterol(out). In terms of biological role, intracellular cholesterol transporter which acts in concert with NPC2 and plays an important role in the egress of cholesterol from the endosomal/lysosomal compartment. Unesterified cholesterol that has been released from LDLs in the lumen of the late endosomes/lysosomes is transferred by NPC2 to the cholesterol-binding pocket in the N-terminal domain of NPC1. Cholesterol binds to NPC1 with the hydroxyl group buried in the binding pocket. May play a role in vesicular trafficking in glia, a process that may be crucial for maintaining the structural and functional integrity of nerve terminals. Inhibits cholesterol-mediated mTORC1 activation throught its interaction with SLC38A9. This chain is NPC intracellular cholesterol transporter 1, found in Mus musculus (Mouse).